The chain runs to 651 residues: Beta-glucuronidase (651 aa).

The first 22 residues, 1–22, serve as a signal peptide directing secretion; the sequence is MLRGPAAVWAALGPLLWACGLA. 2 N-linked (GlcNAc...) asparagine glycosylation sites follow: N172 and N419. E450 functions as the Proton donor in the catalytic mechanism. The N-linked (GlcNAc...) asparagine glycan is linked to N630.

It belongs to the glycosyl hydrolase 2 family. As to quaternary structure, homotetramer.

Its subcellular location is the lysosome. The enzyme catalyses a beta-D-glucuronoside + H2O = D-glucuronate + an alcohol. Inhibited by L-aspartic acid. Functionally, plays an important role in the degradation of dermatan and keratan sulfates. The protein is Beta-glucuronidase (GUSB) of Felis catus (Cat).